We begin with the raw amino-acid sequence, 344 residues long: Phenylalanine--tRNA ligase alpha subunit (344 aa).

Residue Glu-256 participates in Mg(2+) binding.

It belongs to the class-II aminoacyl-tRNA synthetase family. Phe-tRNA synthetase alpha subunit type 1 subfamily. Tetramer of two alpha and two beta subunits. Requires Mg(2+) as cofactor.

Its subcellular location is the cytoplasm. It catalyses the reaction tRNA(Phe) + L-phenylalanine + ATP = L-phenylalanyl-tRNA(Phe) + AMP + diphosphate + H(+). The polypeptide is Phenylalanine--tRNA ligase alpha subunit (Bacillus licheniformis (strain ATCC 14580 / DSM 13 / JCM 2505 / CCUG 7422 / NBRC 12200 / NCIMB 9375 / NCTC 10341 / NRRL NRS-1264 / Gibson 46)).